A 185-amino-acid polypeptide reads, in one-letter code: Ribosome-recycling factor (185 aa).

The protein belongs to the RRF family.

Its subcellular location is the cytoplasm. In terms of biological role, responsible for the release of ribosomes from messenger RNA at the termination of protein biosynthesis. May increase the efficiency of translation by recycling ribosomes from one round of translation to another. The chain is Ribosome-recycling factor from Dichelobacter nodosus (strain VCS1703A).